We begin with the raw amino-acid sequence, 209 residues long: Large ribosomal subunit protein uL3 (209 aa).

Gln-150 is subject to N5-methylglutamine.

The protein belongs to the universal ribosomal protein uL3 family. Part of the 50S ribosomal subunit. Forms a cluster with proteins L14 and L19. Methylated by PrmB.

One of the primary rRNA binding proteins, it binds directly near the 3'-end of the 23S rRNA, where it nucleates assembly of the 50S subunit. The chain is Large ribosomal subunit protein uL3 from Vibrio campbellii (strain ATCC BAA-1116).